The primary structure comprises 451 residues: UPF0210 protein Cbei_2352 (451 aa).

It belongs to the UPF0210 family. Homodimer.

The polypeptide is UPF0210 protein Cbei_2352 (Clostridium beijerinckii (strain ATCC 51743 / NCIMB 8052) (Clostridium acetobutylicum)).